Reading from the N-terminus, the 61-residue chain is Metallothionein-2 (61 aa).

At Met1 the chain carries N-acetylmethionine. The segment at 1 to 29 (MDPNCSCATDGSCSCAGSCKCKQCKCTSC) is beta. A divalent metal cation contacts are provided by Cys5, Cys7, Cys13, Cys15, Cys19, Cys21, Cys24, Cys26, Cys29, Cys33, Cys34, Cys36, Cys37, Cys41, Cys44, Cys48, Cys50, and Cys57. Residues 30–61 (KKSCCSCCPVGCAKCSQGCICKEASDKCSCCA) form an alpha region. Ser58 is subject to Phosphoserine. A divalent metal cation contacts are provided by Cys59 and Cys60.

This sequence belongs to the metallothionein superfamily. Type 1 family.

Metallothioneins have a high content of cysteine residues that bind various heavy metals; these proteins are transcriptionally regulated by both heavy metals and glucocorticoids. The sequence is that of Metallothionein-2 (Mt2) from Rattus norvegicus (Rat).